The chain runs to 158 residues: Cathelicidin-6 (158 aa).

The first 29 residues, 1-29, serve as a signal peptide directing secretion; sequence METQRASLSLGRWSLWLLLLGLALPSASA. Positions 30-131 are excised as a propeptide; that stretch reads QALSYREAVL…NVTCEELQSV (102 aa). 2 cysteine pairs are disulfide-bonded: cysteine 86-cysteine 97 and cysteine 108-cysteine 125.

Belongs to the cathelicidin family.

It is found in the secreted. Its function is as follows. Exerts a potent antimicrobial activity against Gram-negative and Gram-positive bacteria, including methicillin-resistant Staphylococcus aureus, and fungi. This is Cathelicidin-6 (CATHL6) from Bos taurus (Bovine).